A 674-amino-acid polypeptide reads, in one-letter code: Tripartite terminase subunit 3 (674 aa).

The Walker A motif motif lies at 212–219 (VPRRHGKT). A Walker B motif motif is present at residues 305 to 310 (LLLVDE). E310 (for ATPase activity) is an active-site residue. Residues D463 and E534 each act as for nuclease activity in the active site. The segment at 580–600 (GRDKALAVEQFISRFNSGYIK) is required for interaction with UL56 and DNA packaging. D651 acts as the For nuclease activity in catalysis.

It belongs to the herpesviridae TRM3 protein family. Interacts with the terminase subunits TRM1 and TRM2. Interacts with portal protein.

It is found in the host nucleus. Functionally, component of the molecular motor that translocates viral genomic DNA in empty capsid during DNA packaging. Forms a tripartite terminase complex together with TRM1 and TRM2 in the host cytoplasm. Once the complex reaches the host nucleus, it interacts with the capsid portal vertex. This portal forms a ring in which genomic DNA is translocated into the capsid. TRM3 carries an RNase H-like nuclease activity that plays an important role for the cleavage of concatemeric viral DNA into unit length genomes. The sequence is that of Tripartite terminase subunit 3 from Homo sapiens (Human).